Here is a 294-residue protein sequence, read N- to C-terminus: Autophagy protein 5 (294 aa).

K149 is covalently cross-linked (Glycyl lysine isopeptide (Lys-Gly) (interchain with G-Cter in ATG12)).

This sequence belongs to the ATG5 family. As to quaternary structure, conjugated with ATG12. The ATG5-ATG12 conjugate forms a complex with several units of ATG16. The ATG12-ATG5 conjugate also associates with ATG3. In terms of processing, conjugated to ATG12; which is essential for autophagy. Conjugation with ATG12 involves ATG7 as an E1-like activating enzyme and ATG10 as an E2-like conjugating enzyme.

Its subcellular location is the preautophagosomal structure membrane. Functionally, involved in cytoplasm to vacuole transport (Cvt) and autophagic vesicle formation. Autophagy is essential for maintenance of amino acid levels and protein synthesis under nitrogen starvation. Required for selective autophagic degradation of the nucleus (nucleophagy). Also required for mitophagy, which eliminates defective or superfluous mitochondria in order to fulfill cellular energy requirements and prevent excess ROS production. Conjugation with ATG12, through a ubiquitin-like conjugating system involving ATG7 as an E1-like activating enzyme and ATG10 as an E2-like conjugating enzyme, is essential for its function. The ATG12-ATG5 conjugate acts as an E3-like enzyme which is required for lipidation of ATG8 and ATG8 association to the vesicle membranes. ATG12-ATG5 rearranges the ATG3 catalytic center and enhances its E2 activity. Plays a role in the regulation of filamentous growth and chronological longevity. This is Autophagy protein 5 (ATG5) from Saccharomyces cerevisiae (strain YJM789) (Baker's yeast).